The sequence spans 470 residues: Protein escargot (470 aa).

Residues 271–309 form a disordered region; the sequence is LNLNTSQPGEQAAAKTGDMSPETMPNASAKKDKNQPPRY. C2H2-type zinc fingers lie at residues 309 to 331, 344 to 366, 370 to 392, and 398 to 420; these read YQCPDCQKSYSTFSGLTKHQQFH, FSCKDCDKTYVSLGALKMHIRTH, CKCNLCGKAFSRPWLLQGHIRTH, and FSCQHCHRAFADRSNLRAHLQTH. The C2H2-type 5; atypical zinc finger occupies 426–449; the sequence is YSCTSCSKTFSRMSLLTKHSEGGC. The tract at residues 448–470 is disordered; it reads GCPGGSAGSSSSSELNYAGYAEP.

Belongs to the snail C2H2-type zinc-finger protein family. In terms of tissue distribution, expression is complex and dynamic. In early embryogenesis, expression begins on the dorsal side of the embryo. Expressed in a pattern of longitudinal stripes early in germband elongation. Later in embryogenesis, expression is in cells that correspond to the wing, haltere, leg and genital imaginal disks and the abdominal histoblasts. In the embryonic leg disk, expression is restricted to imaginal cells. Also expressed in the central nervous system (CNS), tracheae and head of stage 14 embryos. CNS and tracheal expression decays during later stages, though head expression persists until late in embryogenesis. In third instar larvae, expression is seen in the brain and in regions of many imaginal tissues including the eye-antennal, wing, leg and haltere disks. Expressed in embryonic, larval and adult male germline stem cells and in the somatic cells of the embryonic gonads.

The protein resides in the nucleus. Transcription factor that can both stimulate and repress transcription. Binds to the consensus DNA sequence 5'-A/GCAGGTG-3'. Regulates cell motility and adhesion during tracheal morphogenesis by stimulating transcription of the DE-cadherin gene shg at branch tips, thereby promoting tracheal tube fusion. Maintains diploidy in imaginal cells by inhibiting the transcription of genes required for endoreplication. Required for development of the genital disk and acts as an intrinsic determinant of wing cell fate. The somatic protein is required for maintenance of male germ cells. Acts with other members of the snail protein family to control embryonic central nervous system development. This is Protein escargot (esg) from Drosophila melanogaster (Fruit fly).